We begin with the raw amino-acid sequence, 130 residues long: DNA-directed RNA polymerase subunit omega (130 aa).

Positions 109-130 (EEELLKGLEGLAPPEEQPEEDE) are disordered.

This sequence belongs to the RNA polymerase subunit omega family. The RNAP catalytic core consists of 2 alpha, 1 beta, 1 beta' and 1 omega subunit. When a sigma factor is associated with the core the holoenzyme is formed, which can initiate transcription.

It carries out the reaction RNA(n) + a ribonucleoside 5'-triphosphate = RNA(n+1) + diphosphate. Its function is as follows. Promotes RNA polymerase assembly. Latches the N- and C-terminal regions of the beta' subunit thereby facilitating its interaction with the beta and alpha subunits. The polypeptide is DNA-directed RNA polymerase subunit omega (Rhodopseudomonas palustris (strain BisA53)).